We begin with the raw amino-acid sequence, 469 residues long: Cysteine--tRNA ligase (469 aa).

C28 contacts Zn(2+). A 'HIGH' region motif is present at residues 30–40; sequence CTVYDLCHIGH. 3 residues coordinate Zn(2+): C216, H241, and E245. The short motif at 273-277 is the 'KMSKS' region element; sequence KMSKS. An ATP-binding site is contributed by K276.

It belongs to the class-I aminoacyl-tRNA synthetase family. As to quaternary structure, monomer. The cofactor is Zn(2+).

It localises to the cytoplasm. It carries out the reaction tRNA(Cys) + L-cysteine + ATP = L-cysteinyl-tRNA(Cys) + AMP + diphosphate. This Colwellia psychrerythraea (strain 34H / ATCC BAA-681) (Vibrio psychroerythus) protein is Cysteine--tRNA ligase.